We begin with the raw amino-acid sequence, 57 residues long: Small ribosomal subunit protein bS21 (57 aa).

Belongs to the bacterial ribosomal protein bS21 family.

This Geobacillus kaustophilus (strain HTA426) protein is Small ribosomal subunit protein bS21.